Here is a 481-residue protein sequence, read N- to C-terminus: Aspartyl/glutamyl-tRNA(Asn/Gln) amidotransferase subunit B (481 aa).

Belongs to the GatB/GatE family. GatB subfamily. Heterotrimer of A, B and C subunits.

It catalyses the reaction L-glutamyl-tRNA(Gln) + L-glutamine + ATP + H2O = L-glutaminyl-tRNA(Gln) + L-glutamate + ADP + phosphate + H(+). It carries out the reaction L-aspartyl-tRNA(Asn) + L-glutamine + ATP + H2O = L-asparaginyl-tRNA(Asn) + L-glutamate + ADP + phosphate + 2 H(+). Its function is as follows. Allows the formation of correctly charged Asn-tRNA(Asn) or Gln-tRNA(Gln) through the transamidation of misacylated Asp-tRNA(Asn) or Glu-tRNA(Gln) in organisms which lack either or both of asparaginyl-tRNA or glutaminyl-tRNA synthetases. The reaction takes place in the presence of glutamine and ATP through an activated phospho-Asp-tRNA(Asn) or phospho-Glu-tRNA(Gln). The polypeptide is Aspartyl/glutamyl-tRNA(Asn/Gln) amidotransferase subunit B (Ehrlichia chaffeensis (strain ATCC CRL-10679 / Arkansas)).